The following is a 527-amino-acid chain: Splicing factor MUD2 (527 aa).

The tract at residues 36–169 is disordered; it reads DNAVIDTHFK…SKFNGDRDKR (134 aa). Over residues 42–55 the composition is skewed to basic and acidic residues; that stretch reads THFKRQKSDGELPK. Serine 49 is subject to Phosphoserine. The segment covering 60-85 has biased composition (polar residues); that stretch reads RNVSHSNNRGPSSIITMSTNRTTYEQ. Residues 94–109 show a composition bias toward basic and acidic residues; that stretch reads SYRDASGRSYNRENRY. Polar residues predominate over residues 110–122; the sequence is SSHNTGPQWNNNP. Basic and acidic residues-rich tracts occupy residues 125–141 and 155–169; these read RQRDERRGRNERFDRRG and RKNEGSKFNGDRDKR. One can recognise an RRM domain in the interval 424–511; sequence LLLLNCLDPL…QFNDRTVLCT (88 aa).

In terms of assembly, MSL5, MUD2 and PRP40 interact to form the commitment complex 2 (CC2), a precursor of mature spliceosomes.

Its function is as follows. Splicing factor that contacts pre-mRNA directly and is a component of the pre-mRNA-U1 snRNP complex (commitment complex 2) that forms during early spliceosome assembly in yeast extracts. The polypeptide is Splicing factor MUD2 (MUD2) (Saccharomyces cerevisiae (strain ATCC 204508 / S288c) (Baker's yeast)).